The following is a 356-amino-acid chain: tRNA N6-adenosine threonylcarbamoyltransferase (356 aa).

Fe cation-binding residues include His-111 and His-115. Residues 143-147 (LASGG), Asp-178, Gly-191, Asp-195, and Asn-286 each bind substrate. Asp-314 contacts Fe cation.

Belongs to the KAE1 / TsaD family. Fe(2+) serves as cofactor.

Its subcellular location is the cytoplasm. It catalyses the reaction L-threonylcarbamoyladenylate + adenosine(37) in tRNA = N(6)-L-threonylcarbamoyladenosine(37) in tRNA + AMP + H(+). Functionally, required for the formation of a threonylcarbamoyl group on adenosine at position 37 (t(6)A37) in tRNAs that read codons beginning with adenine. Is involved in the transfer of the threonylcarbamoyl moiety of threonylcarbamoyl-AMP (TC-AMP) to the N6 group of A37, together with TsaE and TsaB. TsaD likely plays a direct catalytic role in this reaction. In Sorangium cellulosum (strain So ce56) (Polyangium cellulosum (strain So ce56)), this protein is tRNA N6-adenosine threonylcarbamoyltransferase.